Here is a 134-residue protein sequence, read N- to C-terminus: Retinol-binding protein 2 (134 aa).

The all-trans-retinol site is built by Lys41 and Gln109.

The protein belongs to the calycin superfamily. Fatty-acid binding protein (FABP) family. Higher expression in adult small intestine and to a much lesser extent in fetal kidney.

Its subcellular location is the cytoplasm. Functionally, intracellular transport of retinol. The protein is Retinol-binding protein 2 (RBP2) of Homo sapiens (Human).